The following is a 156-amino-acid chain: ATP synthase subunit b (156 aa).

Residues 7–27 traverse the membrane as a helical segment; that stretch reads LIGQTVAFIIFVWFCMKFVWP.

This sequence belongs to the ATPase B chain family. In terms of assembly, F-type ATPases have 2 components, F(1) - the catalytic core - and F(0) - the membrane proton channel. F(1) has five subunits: alpha(3), beta(3), gamma(1), delta(1), epsilon(1). F(0) has three main subunits: a(1), b(2) and c(10-14). The alpha and beta chains form an alternating ring which encloses part of the gamma chain. F(1) is attached to F(0) by a central stalk formed by the gamma and epsilon chains, while a peripheral stalk is formed by the delta and b chains.

It localises to the cell inner membrane. Its function is as follows. F(1)F(0) ATP synthase produces ATP from ADP in the presence of a proton or sodium gradient. F-type ATPases consist of two structural domains, F(1) containing the extramembraneous catalytic core and F(0) containing the membrane proton channel, linked together by a central stalk and a peripheral stalk. During catalysis, ATP synthesis in the catalytic domain of F(1) is coupled via a rotary mechanism of the central stalk subunits to proton translocation. In terms of biological role, component of the F(0) channel, it forms part of the peripheral stalk, linking F(1) to F(0). The chain is ATP synthase subunit b from Shewanella sp. (strain MR-4).